The sequence spans 336 residues: F420-dependent glucose-6-phosphate dehydrogenase (336 aa).

Aspartate 39 is a binding site for coenzyme F420-(gamma-Glu)n. Histidine 40 (proton donor) is an active-site residue. Coenzyme F420-(gamma-Glu)n is bound by residues threonine 76 and 107-108; that span reads TG. Residue glutamate 109 is the Proton acceptor of the active site. Residues asparagine 112, 177–178, and 180–181 each bind coenzyme F420-(gamma-Glu)n; these read GG and AV. Residues threonine 195, lysine 198, lysine 259, and arginine 283 each coordinate substrate.

Belongs to the F420-dependent glucose-6-phosphate dehydrogenase family. As to quaternary structure, homodimer.

The catalysed reaction is oxidized coenzyme F420-(gamma-L-Glu)(n) + D-glucose 6-phosphate + H(+) = 6-phospho-D-glucono-1,5-lactone + reduced coenzyme F420-(gamma-L-Glu)(n). Catalyzes the coenzyme F420-dependent oxidation of glucose 6-phosphate (G6P) to 6-phosphogluconolactone. Appears to have a role in resistance to oxidative stress, via its consumption of G6P that serves as a source of reducing power to combat oxidative stress in mycobacteria. More precisely, is likely involved in a F420-dependent anti-oxidant mechanism that protects M.tuberculosis against oxidative stress and bactericidal agents. Its function is as follows. Is essential for the bioreductive activation of the bicyclic 4-nitroimidazole prodrug PA-824 (nitroimidazo-oxazine) developed for anti-tuberculosis therapy against both replicating and persistent bacteria. It does not interact directly with PA-824 but, rather, provides reduced F420 to the deazaflavin-dependent nitroreductase Ddn, which in turn activates PA-824. This is F420-dependent glucose-6-phosphate dehydrogenase (fgd1) from Mycobacterium tuberculosis (strain CDC 1551 / Oshkosh).